The following is a 209-amino-acid chain: Small ribosomal subunit protein uS3 (209 aa).

A KH type-2 domain is found at 38-107 (IRKVVKNAYS…RVIVNVEEIK (70 aa)).

Belongs to the universal ribosomal protein uS3 family. As to quaternary structure, part of the 30S ribosomal subunit. Forms a tight complex with proteins S10 and S14.

Binds the lower part of the 30S subunit head. Binds mRNA in the 70S ribosome, positioning it for translation. This Pseudothermotoga lettingae (strain ATCC BAA-301 / DSM 14385 / NBRC 107922 / TMO) (Thermotoga lettingae) protein is Small ribosomal subunit protein uS3.